The primary structure comprises 493 residues: Trichothecene 8-O-acetyltransferase (493 aa).

The segment covering 180 to 191 has biased composition (polar residues); the sequence is QDQNENEVQQPK. The tract at residues 180–199 is disordered; the sequence is QDQNENEVQQPKNLPDPDEP.

Its pathway is sesquiterpene biosynthesis; trichothecene biosynthesis. In terms of biological role, trichothecene 8-O-acetyltransferase; part of 2-gene cluster involved in trichothecene C-8 modification that mediates the biosynthesis of T2-toxin. The biosynthesis of trichothecenes begins with the cyclization of farnesyl diphosphate to trichodiene and is catalyzed by the trichodiene synthase TRI5. Trichodiene undergoes a series of oxygenations catalyzed by the cytochrome P450 monooxygenase TRI4. TRI4 controls the addition of four oxygens at C-2, C-3, C-11, and the C-12, C-13-epoxide to form the intermediate isotrichotriol. Isotrichotriol then undergoes a non-enzymatic isomerization and cyclization to form isotrichodermol. During this process, the oxygen at the C-2 position becomes the pyran ring oxygen and the hydroxyl group at C-11 is lost. More complex type A trichothecenes are built by modifying isotrichodermol through a series of paired hydroxylation and acetylation or acylation steps. Isotrichodermol is converted to isotrichodermin by the acetyltransferase TRI101. TRI101 encodes a C-3 transacetylase that acts as a self-protection or resistance factor during biosynthesis and that the presence of a free C-3 hydroxyl group is a key component of Fusarium trichothecene phytotoxicity. A second hydroxyl group is added to C-15 by the trichothecene C-15 hydroxylase TRI11, producing 15-decalonectrin, which is then acetylated by TRI3, producing calonectrin. A third hydroxyl group is added at C-4 by the cytochrome P450 monooxygenase TRI13, converting calonectrin to 3,15-diacetoxyspirpenol, which is subsequently acetylated bythe acetyltransferase TRI7. A fourth hydroxyl group is added to C-8 by the cytochrome P450 monooxygenase TRI1, followed by the addition of an isovaleryl moiety by TRI16. Finally, the acetyl group is removed from the C-3 position by the trichothecene C-3 esterase TRI8 to produce T-2 toxin. The sequence is that of Trichothecene 8-O-acetyltransferase from Fusarium sporotrichioides.